The following is a 127-amino-acid chain: UPF0325 protein VC_2264 (127 aa).

This sequence belongs to the UPF0325 family.

The polypeptide is UPF0325 protein VC_2264 (Vibrio cholerae serotype O1 (strain ATCC 39315 / El Tor Inaba N16961)).